The primary structure comprises 199 residues: Recombination protein RecR (199 aa).

Residues 57–72 (CNLCNNFSEQEICPLC) form a C4-type zinc finger. Residues 80-175 (TLLCIVEMPS…QVSRIARGLP (96 aa)) form the Toprim domain.

This sequence belongs to the RecR family.

Functionally, may play a role in DNA repair. It seems to be involved in an RecBC-independent recombinational process of DNA repair. It may act with RecF and RecO. The protein is Recombination protein RecR of Methylobacillus flagellatus (strain ATCC 51484 / DSM 6875 / VKM B-1610 / KT).